Here is a 100-residue protein sequence, read N- to C-terminus: NADH-quinone oxidoreductase subunit K (100 aa).

The next 3 membrane-spanning stretches (helical) occupy residues 4–24 (LQHGLILAAILFVLGLTGLII), 28–48 (LLFMLISLEVMINAAALAFVV), and 60–80 (VMYILAITLAAAEASIGLALL).

The protein belongs to the complex I subunit 4L family. As to quaternary structure, NDH-1 is composed of 13 different subunits. Subunits NuoA, H, J, K, L, M, N constitute the membrane sector of the complex.

The protein resides in the cell inner membrane. The catalysed reaction is a quinone + NADH + 5 H(+)(in) = a quinol + NAD(+) + 4 H(+)(out). Its function is as follows. NDH-1 shuttles electrons from NADH, via FMN and iron-sulfur (Fe-S) centers, to quinones in the respiratory chain. The immediate electron acceptor for the enzyme in this species is believed to be ubiquinone. Couples the redox reaction to proton translocation (for every two electrons transferred, four hydrogen ions are translocated across the cytoplasmic membrane), and thus conserves the redox energy in a proton gradient. This is NADH-quinone oxidoreductase subunit K from Yersinia enterocolitica serotype O:8 / biotype 1B (strain NCTC 13174 / 8081).